The primary structure comprises 1305 residues: Adenylate cyclase type 9 (1305 aa).

Topologically, residues 1-110 (MASPVNQQLL…CFPQTQRRFR (110 aa)) are cytoplasmic. Low complexity predominate over residues 46–55 (ISSSCSSGES). Residues 46-71 (ISSSCSSGESGVKKTGGSGGARRQKK) are disordered. Residues 111–131 (YALMYLSVAGLLWSIYFSVHM) traverse the membrane as a helical segment. Residues 132–134 (KTK) lie on the Extracellular side of the membrane. Residues 135–155 (LVSHLVPTLCFLIVCLGFFFF) form a helical membrane-spanning segment. Over 156 to 164 (TFTKSYARH) the chain is Cytoplasmic. A helical transmembrane segment spans residues 165–185 (CTAISLLVTLLVFTLTLASQF). Over 186-209 (QVLNPGLGSDSLSNLTSFSATGSS) the chain is Extracellular. Asparagine 199 is a glycosylation site (N-linked (GlcNAc...) asparagine). Residues 210 to 229 (SCLSQVGSFSICVEVLLLLY) traverse the membrane as a helical segment. The Cytoplasmic segment spans residues 230 to 235 (TVMHLP). Residues 236–253 (LYLSACLGVAYSILFETF) form a helical membrane-spanning segment. Topologically, residues 254–274 (GYHFRDESCFVLLVGRMAHWE) are extracellular. A helical transmembrane segment spans residues 275–295 (LLSKALLHVCIHAIGVHLFIM). The Cytoplasmic segment spans residues 296-778 (SEVRSRSTFL…VKTFASATFS (483 aa)). Residues 343–369 (QGDDESENSVKRHSASSPKSRKKKSSI) form a disordered region. The span at 353 to 368 (KRHSASSPKSRKKKSS) shows a compositional bias: basic residues. The Mg(2+) site is built by aspartate 393, isoleucine 394, and aspartate 437. Residues 393–398 (DIVGFT), 435–437 (LGD), and arginine 481 each bind ATP. Polar residues-rich tracts occupy residues 607–618 (SDSHTNCTQPET) and 670–680 (ESSTGDTLTNS). Positions 607–680 (SDSHTNCTQP…SSTGDTLTNS (74 aa)) are disordered. A helical transmembrane segment spans residues 779–799 (SLQDVLLNYFIFVLLSVACLL). Residues 800–810 (KPGTNTVSPPT) lie on the Extracellular side of the membrane. The chain crosses the membrane as a helical span at residues 811 to 831 (LALVLLSVCGLLGFLSLLVSV). At 832–859 (RMAFYLEDMLLCTRRLLEIISGWVPRHF) the chain is on the cytoplasmic side. The helical transmembrane segment at 860 to 880 (IGTVLVCLPAAVIFSYLSSDF) threads the bilayer. Over 881–883 (YTD) the chain is Extracellular. Residues 884 to 904 (IHYTMFLCSALLIPMVQYCNF) form a helical membrane-spanning segment. At 905-911 (CQLSSSA) the chain is on the cytoplasmic side. A helical membrane pass occupies residues 912–932 (LLLATITGATMLILIYLPLCP). At 933–966 (QRPPLDPGTDIEANLSTSNSSYETLDNPRTELPF) the chain is on the extracellular side. N-linked (GlcNAc...) asparagine glycosylation is found at asparagine 946 and asparagine 951. Residues 967-987 (TRLGQEIAVAYFLLLLLVWFL) traverse the membrane as a helical segment. At 988–1305 (NREFDVSYRL…EERGRDGGAR (318 aa)) the chain is on the cytoplasmic side. ATP-binding positions include lysine 1099, 1176–1178 (DIW), 1183–1187 (NIASR), and lysine 1223. The segment at 1261 to 1305 (SIGRSPTDEISSLVTGGKGAVELGSGEAERKREKAEERGRDGGAR) is disordered. The span at 1287–1305 (EAERKREKAEERGRDGGAR) shows a compositional bias: basic and acidic residues.

It belongs to the adenylyl cyclase class-4/guanylyl cyclase family. It depends on Mg(2+) as a cofactor. Mn(2+) is required as a cofactor. As to expression, detected in oocytes.

It is found in the cell membrane. It catalyses the reaction ATP = 3',5'-cyclic AMP + diphosphate. Its function is as follows. Adenylyl cyclase that catalyzes the formation of the signaling molecule cAMP in response to activation of G protein-coupled receptors. The polypeptide is Adenylate cyclase type 9 (adcy9) (Xenopus laevis (African clawed frog)).